The primary structure comprises 86 residues: Small ribosomal subunit protein uS17 (86 aa).

It belongs to the universal ribosomal protein uS17 family. Part of the 30S ribosomal subunit.

Its function is as follows. One of the primary rRNA binding proteins, it binds specifically to the 5'-end of 16S ribosomal RNA. This chain is Small ribosomal subunit protein uS17, found in Tropheryma whipplei (strain TW08/27) (Whipple's bacillus).